A 114-amino-acid polypeptide reads, in one-letter code: Probable non-functional T cell receptor beta variable 5-7 (114 aa).

The N-terminal stretch at 1–21 is a signal peptide; it reads MGPGLLCWVLLCPLGEGPVDA. In terms of domain architecture, Ig-like spans 22 to 114; that stretch reads GVTQSPTHLI…SALYLCASSL (93 aa). A disulfide bond links C42 and C110. The N-linked (GlcNAc...) asparagine glycan is linked to N90.

Alpha-beta TR is a heterodimer composed of an alpha and beta chain; disulfide-linked. The alpha-beta TR is associated with the transmembrane signaling CD3 coreceptor proteins to form the TR-CD3 (TcR or TCR). The assembly of alpha-beta TR heterodimers with CD3 occurs in the endoplasmic reticulum where a single alpha-beta TR heterodimer associates with one CD3D-CD3E heterodimer, one CD3G-CD3E heterodimer and one CD247 homodimer forming a stable octameric structure. CD3D-CD3E and CD3G-CD3E heterodimers preferentially associate with TR alpha and TR beta chains, respectively. The association of the CD247 homodimer is the last step of TcR assembly in the endoplasmic reticulum and is required for transport to the cell surface.

It is found in the cell membrane. Functionally, probable non-functional open reading frame (ORF) of V region of the variable domain of T cell receptor (TR) beta chain. Non-functional ORF generally cannot participate in the synthesis of a productive T cell receptor (TR) chain due to altered V-(D)-J or switch recombination and/or splicing site (at mRNA level) and/or conserved amino acid change (protein level). Alpha-beta T cell receptors are antigen specific receptors which are essential to the immune response and are present on the cell surface of T lymphocytes. Recognize peptide-major histocompatibility (MH) (pMH) complexes that are displayed by antigen presenting cells (APC), a prerequisite for efficient T cell adaptive immunity against pathogens. Binding of alpha-beta TR to pMH complex initiates TR-CD3 clustering on the cell surface and intracellular activation of LCK that phosphorylates the ITAM motifs of CD3G, CD3D, CD3E and CD247 enabling the recruitment of ZAP70. In turn ZAP70 phosphorylates LAT, which recruits numerous signaling molecules to form the LAT signalosome. The LAT signalosome propagates signal branching to three major signaling pathways, the calcium, the mitogen-activated protein kinase (MAPK) kinase and the nuclear factor NF-kappa-B (NF-kB) pathways, leading to the mobilization of transcription factors that are critical for gene expression and essential for T cell growth and differentiation. The T cell repertoire is generated in the thymus, by V-(D)-J rearrangement. This repertoire is then shaped by intrathymic selection events to generate a peripheral T cell pool of self-MH restricted, non-autoaggressive T cells. Post-thymic interaction of alpha-beta TR with the pMH complexes shapes TR structural and functional avidity. The polypeptide is Probable non-functional T cell receptor beta variable 5-7 (Homo sapiens (Human)).